Reading from the N-terminus, the 786-residue chain is Keratin, type I cytoskeletal 9 (786 aa).

The segment at 1-21 (MNCRQFLSSHCSRDSSGGGGG) is disordered. The segment at 1 to 136 (MNCRQFLSSH…SGAGGILGAD (136 aa)) is head. The residue at position 52 (S52) is a Phosphoserine. The tract at residues 137 to 172 (EKTTMQDLNSRLASYLDKVQALEDANKELESKIREW) is coil 1A. Residues 137-449 (EKTTMQDLNS…SLLEGGQEDF (313 aa)) form the IF rod domain. The interval 173–191 (YDKQGSRTFHRDYSPYYDT) is linker 1. The interval 192 to 283 (IEDLKNQIVN…KNHEDEMSQL (92 aa)) is coil 1B. Positions 284-306 (TGQNSGDVNVEMNAAPGRDLTKI) are linker 12. A coil 2 region spans residues 307–445 (LNDMREEYER…KTYRSLLEGG (139 aa)). The tract at residues 446–760 (QEDFESHESG…GGGSGSKGGS (315 aa)) is tail. The segment at 447-786 (EDFESHESGQ…DDTQGYHIQY (340 aa)) is disordered. Gly residues-rich tracts occupy residues 460 to 657 (GSGG…GGSG) and 664 to 761 (SSSG…GGSG). Residues 762–773 (RSSQVQSSSSKS) show a composition bias toward low complexity.

This sequence belongs to the intermediate filament family. Heterotetramer of two type I and two type II keratins.

Its function is as follows. May serve an important special function either in the mature palmar and plantar skin tissue or in the morphogenetic program of the formation of these tissues. Plays a role in keratin filament assembly. The sequence is that of Keratin, type I cytoskeletal 9 from Canis lupus familiaris (Dog).